Consider the following 236-residue polypeptide: 2,3,4,5-tetrahydropyridine-2,6-dicarboxylate N-acetyltransferase (236 aa).

Belongs to the transferase hexapeptide repeat family. DapH subfamily.

It carries out the reaction (S)-2,3,4,5-tetrahydrodipicolinate + acetyl-CoA + H2O = L-2-acetamido-6-oxoheptanedioate + CoA. It functions in the pathway amino-acid biosynthesis; L-lysine biosynthesis via DAP pathway; LL-2,6-diaminopimelate from (S)-tetrahydrodipicolinate (acetylase route): step 1/3. Its function is as follows. Catalyzes the transfer of an acetyl group from acetyl-CoA to tetrahydrodipicolinate. This is 2,3,4,5-tetrahydropyridine-2,6-dicarboxylate N-acetyltransferase from Listeria ivanovii.